The following is a 404-amino-acid chain: S-adenosylmethionine synthase (404 aa).

His-18 provides a ligand contact to ATP. Position 20 (Asp-20) interacts with Mg(2+). Glu-46 contributes to the K(+) binding site. L-methionine contacts are provided by Glu-59 and Gln-102. The tract at residues 102-112 (QSPDIAQGVDT) is flexible loop. ATP-binding positions include 177–179 (DGK), 249–250 (KF), Asp-258, 264–265 (RK), Ala-281, and Lys-285. Asp-258 contributes to the L-methionine binding site. Lys-289 serves as a coordination point for L-methionine.

It belongs to the AdoMet synthase family. As to quaternary structure, homotetramer; dimer of dimers. It depends on Mg(2+) as a cofactor. K(+) serves as cofactor.

It is found in the cytoplasm. The enzyme catalyses L-methionine + ATP + H2O = S-adenosyl-L-methionine + phosphate + diphosphate. Its pathway is amino-acid biosynthesis; S-adenosyl-L-methionine biosynthesis; S-adenosyl-L-methionine from L-methionine: step 1/1. In terms of biological role, catalyzes the formation of S-adenosylmethionine (AdoMet) from methionine and ATP. The overall synthetic reaction is composed of two sequential steps, AdoMet formation and the subsequent tripolyphosphate hydrolysis which occurs prior to release of AdoMet from the enzyme. This Nocardia farcinica (strain IFM 10152) protein is S-adenosylmethionine synthase.